The primary structure comprises 403 residues: MFLGAAMAQVSLCMIVRDEAELLPRCLASVKDQVDELIVLDTGSRDRTPAIATEAGAKLLHTDWADDFSAARNQAIAAATGDWILVLDADEELILEAWTELRSQLDQPEALAFTVLREETQAGQVPYSRLSRLFRNRPDIRFQRPYHELVDDSLLALQQQEPNWRITAWPTPVIRHYGYGRDRLQQRGTAERMRQSLETWLADHPEDAYLCSKLGGLLVQEGDLKAAQRWLKQGLKQGRPEPAVRYELLYHLALLERRQGDLDAAIDRYQAALQEPVDAIHKLGAWVNLSHLYRDRGQLGLAYDAARQAVAAAPQATVALTALGLAARAIGNYPEAIAAYQQALQLDPNDPSLYQNLGAVLFQVGQLEASYAAFRQAIAGYEQQGSPEAQRLELRLQAMGIRL.

TPR repeat units follow at residues 208-243 (AYLC…PEPA), 244-282 (VRYE…AIHK), 283-316 (LGAW…APQA), 317-350 (TVAL…DPND), and 351-387 (PSLY…QGSP).

This chain is TPR repeat-containing protein Synpcc7942_0270, found in Synechococcus elongatus (strain ATCC 33912 / PCC 7942 / FACHB-805) (Anacystis nidulans R2).